Reading from the N-terminus, the 82-residue chain is Cytochrome b559 subunit alpha (82 aa).

The helical transmembrane segment at 21 to 35 threads the bilayer; it reads VIHSITIPALFIAGW. Histidine 23 provides a ligand contact to heme.

This sequence belongs to the PsbE/PsbF family. As to quaternary structure, heterodimer of an alpha subunit and a beta subunit. PSII is composed of 1 copy each of membrane proteins PsbA, PsbB, PsbC, PsbD, PsbE, PsbF, PsbH, PsbI, PsbJ, PsbK, PsbL, PsbM, PsbT, PsbX, PsbY, PsbZ, Psb30/Ycf12, peripheral proteins PsbO, CyanoQ (PsbQ), PsbU, PsbV and a large number of cofactors. It forms dimeric complexes. Requires heme b as cofactor.

The protein resides in the cellular thylakoid membrane. Functionally, this b-type cytochrome is tightly associated with the reaction center of photosystem II (PSII). PSII is a light-driven water:plastoquinone oxidoreductase that uses light energy to abstract electrons from H(2)O, generating O(2) and a proton gradient subsequently used for ATP formation. It consists of a core antenna complex that captures photons, and an electron transfer chain that converts photonic excitation into a charge separation. In Nostoc sp. (strain PCC 7120 / SAG 25.82 / UTEX 2576), this protein is Cytochrome b559 subunit alpha.